The following is a 501-amino-acid chain: Putative antiporter subunit mnhD2 (501 aa).

The next 14 membrane-spanning stretches (helical) occupy residues Ser-4–Ile-24, Ile-33–Val-53, Leu-79–Phe-99, Tyr-109–Ala-129, Leu-131–Leu-151, Ile-162–Leu-182, Ile-207–Phe-227, Phe-245–Phe-265, Pro-274–Tyr-294, Ile-309–Phe-329, Asp-334–Leu-354, Phe-369–Gly-389, Leu-409–Val-429, and Asn-452–Phe-472.

This sequence belongs to the CPA3 antiporters (TC 2.A.63) subunit D family. As to quaternary structure, may form a heterooligomeric complex that consists of seven subunits: mnhA2, mnhB2, mnhC2, mnhD2, mnhE2, mnhF2 and mnhG2.

It is found in the cell membrane. This Staphylococcus saprophyticus subsp. saprophyticus (strain ATCC 15305 / DSM 20229 / NCIMB 8711 / NCTC 7292 / S-41) protein is Putative antiporter subunit mnhD2 (mnhD2).